The sequence spans 139 residues: Coat protein TP2 (139 aa).

It is found in the virion. The sequence is that of Coat protein TP2 from Thermoproteus tenax virus 1 (strain KRA1) (TTV1).